A 59-amino-acid polypeptide reads, in one-letter code: MEEPTPEPVYVDVDKGLTLACFVFLCLFLVVMIIRCAKVIMDPYSAIPTSTWEEQHLDD.

A helical membrane pass occupies residues 17–37 (LTLACFVFLCLFLVVMIIRCA).

The protein localises to the membrane. The sequence is that of Cortexin domain-containing 1 protein from Homo sapiens (Human).